Reading from the N-terminus, the 437-residue chain is Phosphoglucosamine mutase (437 aa).

Ser-93 acts as the Phosphoserine intermediate in catalysis. Ser-93, Asp-230, Asp-232, and Asp-234 together coordinate Mg(2+). At Ser-93 the chain carries Phosphoserine.

The protein belongs to the phosphohexose mutase family. Mg(2+) is required as a cofactor. Post-translationally, activated by phosphorylation.

The enzyme catalyses alpha-D-glucosamine 1-phosphate = D-glucosamine 6-phosphate. Functionally, catalyzes the conversion of glucosamine-6-phosphate to glucosamine-1-phosphate. The sequence is that of Phosphoglucosamine mutase from Clavibacter michiganensis subsp. michiganensis (strain NCPPB 382).